Reading from the N-terminus, the 434-residue chain is uncharacterized protein (434 aa).

Positions 4–62 constitute a TRAM domain; sequence LLTIHTQVEGEITALAFGGAGILRYHGFVIFVPFTAPGDQIICRIIEIKKSFAVAELVK. 4 residues coordinate [4Fe-4S] cluster: Cys75, Cys81, Cys84, and Cys161. S-adenosyl-L-methionine-binding residues include Gln266, Tyr295, Glu316, and Asn364. The active-site Nucleophile is Cys391.

This sequence belongs to the class I-like SAM-binding methyltransferase superfamily. RNA M5U methyltransferase family.

This is an uncharacterized protein from Protochlamydia amoebophila (strain UWE25).